A 1896-amino-acid polypeptide reads, in one-letter code: Plexin-A1 (1896 aa).

An N-terminal signal peptide occupies residues 1 to 26; sequence MPLPPRSLQVLLLLLLLLLLLPGMWA. The region spanning 27-512 is the Sema domain; the sequence is EAGLPRAGGG…TEKQVTRVPV (486 aa). Topologically, residues 27 to 1244 are extracellular; it reads EAGLPRAGGG…VYSDSLLTLP (1218 aa). A glycan (N-linked (GlcNAc...) asparagine) is linked at Asn77. 10 cysteine pairs are disulfide-bonded: Cys95–Cys104, Cys130–Cys138, Cys286–Cys407, Cys302–Cys358, Cys376–Cys395, Cys515–Cys532, Cys521–Cys563, Cys524–Cys541, Cys535–Cys547, and Cys598–Cys617. 3 N-linked (GlcNAc...) asparagine glycosylation sites follow: Asn660, Asn672, and Asn701. 4 IPT/TIG domains span residues 864–959, 961–1045, 1048–1147, and 1150–1236; these read PKIL…FTFV, PTFY…YNYT, PTIL…FLYY, and PVLE…LQVY. Asn1043 carries N-linked (GlcNAc...) asparagine glycosylation. 2 N-linked (GlcNAc...) asparagine glycosylation sites follow: Asn1187 and Asn1212. Residues 1245–1265 traverse the membrane as a helical segment; it reads AIVGIGGGGGLLLLVIVAVLI. A coiled-coil region spans residues 1264 to 1317; sequence LIAYKRKSRDADRTLKRLQLQMDNLESRVALECKEAFAELQTDIHELTNDLDGA. The Cytoplasmic segment spans residues 1266 to 1896; that stretch reads AYKRKSRDAD…QVVDTMALSS (631 aa).

Belongs to the plexin family. In terms of assembly, interacts directly with NRP1 and NRP2. Interacts with PLXN1B. Interacts with FARP2, RND1 and KDR/VEGFR2. Binding of SEMA3A leads to dissociation of FARP2. Interacts with CRMP1, DPYSL2/CRMP2, DPYSL3/CRMP3 and DPYSL4/CRMP4. Interacts (via TIG domains) with TREM2; the interaction mediates SEMA6D binding and signaling through TYROBP. As to expression, detected in fetal brain, lung, liver and kidney.

It is found in the cell membrane. In terms of biological role, coreceptor for SEMA3A, SEMA3C, SEMA3F and SEMA6D. Necessary for signaling by class 3 semaphorins and subsequent remodeling of the cytoskeleton. Plays a role in axon guidance, invasive growth and cell migration. Class 3 semaphorins bind to a complex composed of a neuropilin and a plexin. The plexin modulates the affinity of the complex for specific semaphorins, and its cytoplasmic domain is required for the activation of down-stream signaling events in the cytoplasm. Acts as coreceptor of TREM2 for SEMA6D in dendritic cells and is involved in the generation of immune responses and skeletal homeostasis. The chain is Plexin-A1 from Homo sapiens (Human).